Consider the following 594-residue polypeptide: Capsid vertex component 1 (594 aa).

4 disordered regions span residues 52 to 77, 176 to 205, 443 to 468, and 575 to 594; these read GRSTGRAPGGDEDDAPASDDAEDAVG, NKRDRQHQLATTTNHRRRGGLRNNLDNGSD, ARRQRERSAPKPQELLFGPRNESGPP, and GRQEPETPRVSGRRLPFDDL. Acidic residues predominate over residues 61–76; it reads GDEDDAPASDDAEDAV.

The protein belongs to the herpesviridae CVC1 protein family. Interacts (via C-terminus) with capsid vertex component 2/CVC2.

It is found in the virion. The protein resides in the host nucleus. Functionally, capsid vertex-specific component that plays a role during viral DNA encapsidation, assuring correct genome cleavage and presumably stabilizing capsids that contain full-length viral genomes. This Homo sapiens (Human) protein is Capsid vertex component 1.